A 97-amino-acid chain; its full sequence is MNKKKTKICCIYHPQDEDEEGCTSDHQHDELPESSSSSSSESENDKDLGFDERRKRRVERRRRKLRDNTDSAPNAYEVQPDYSEHRKKMMEKKSNNT.

The segment at 1–97 (MNKKKTKICC…KMMEKKSNNT (97 aa)) is disordered. Positions 43 to 53 (ENDKDLGFDER) are enriched in basic and acidic residues. The span at 54–65 (RKRRVERRRRKL) shows a compositional bias: basic residues.

Belongs to the YPI1 family.

It localises to the nucleus. Functionally, regulator of type 1 phosphatases which maintains protein phosphatase activity under strict control. In Vanderwaltozyma polyspora (strain ATCC 22028 / DSM 70294 / BCRC 21397 / CBS 2163 / NBRC 10782 / NRRL Y-8283 / UCD 57-17) (Kluyveromyces polysporus), this protein is Type 1 phosphatases regulator YPI2 (YPI2).